A 116-amino-acid polypeptide reads, in one-letter code: HTH-type transcriptional regulator AnsR (116 aa).

Positions 6–60 (LTELRKKKNWSLQYTADLLGIAKSTYAGYESGYRRPSLEALAMLADLFDTTCDEL) constitute an HTH cro/C1-type domain. A DNA-binding region (H-T-H motif) is located at residues 17 to 36 (LQYTADLLGIAKSTYAGYES).

Transcriptional repressor for the ans operon coding for L-asparaginase and L-aspartase. NH4(+) may influence this repression. This is HTH-type transcriptional regulator AnsR (ansR) from Bacillus subtilis (strain 168).